The chain runs to 483 residues: PAT complex subunit CCDC47 (483 aa).

The signal sequence occupies residues 1-20; sequence MKAFHTFCVVLLVFGSVSEA. The Cytoplasmic segment spans residues 21–135; it reads KFDDFEDEED…PAHLQNSWES (115 aa). The segment at 46 to 118 is disordered; the sequence is MEDSVTESPQ…PDTSSSKNKD (73 aa). Acidic residues predominate over residues 60-104; that stretch reads TEDDEDETTVELEGQDENQEGDFEDADTQEGDTESEPYDDEEFEG. Residues 105 to 118 show a composition bias toward basic and acidic residues; the sequence is YEDKPDTSSSKNKD. The chain crosses the membrane as a helical span at residues 136-155; sequence YYLEILMVTGLLAYIMNYII. Topologically, residues 156–483 are lumenal; that stretch reads GKNKNSRLAQ…KMKQIKVKAM (328 aa). The N-linked (GlcNAc...) asparagine glycan is linked to Asn-178. Residues 424 to 483 are disordered; that stretch reads QRQEAAQSRREEKKRAEKERIMNEEDPEKQRRLEEAALRREQKKLEKKQMKMKQIKVKAM. The segment covering 430 to 472 has biased composition (basic and acidic residues); sequence QSRREEKKRAEKERIMNEEDPEKQRRLEEAALRREQKKLEKKQ. A coiled-coil region spans residues 450 to 483; it reads PEKQRRLEEAALRREQKKLEKKQMKMKQIKVKAM. The span at 473 to 483 shows a compositional bias: basic residues; that stretch reads MKMKQIKVKAM.

Belongs to the CCDC47 family. Component of the PAT complex, composed of WDR83OS/Asterix and CCDC47. The PAT complex is part of the multi-pass translocon (MPT) complex, composed of three subcomplexes, the GEL complex (composed of RAB5IF/OPTI and TMCO1), the BOS complex (composed of NCLN/Nicalin, NOMO and TMEM147) and the PAT complex (composed of WDR83OS/Asterix and CCDC47). The MPT complex associates with the SEC61 complex. Interacts with VCP, HSPA5, DERL1, DERL2 and SELENOS.

Its subcellular location is the endoplasmic reticulum membrane. It localises to the rough endoplasmic reticulum membrane. Its function is as follows. Component of the multi-pass translocon (MPT) complex that mediates insertion of multi-pass membrane proteins into the lipid bilayer of membranes. The MPT complex takes over after the SEC61 complex: following membrane insertion of the first few transmembrane segments of proteins by the SEC61 complex, the MPT complex occludes the lateral gate of the SEC61 complex to promote insertion of subsequent transmembrane regions. Within the MPT complex, the PAT subcomplex sequesters any highly polar regions in the transmembrane domains away from the non-polar membrane environment until they can be buried in the interior of the fully assembled protein. Within the PAT subcomplex, CCDC47 occludes the lateral gate of the SEC61 complex. Involved in the regulation of calcium ion homeostasis in the ER. Required for proper protein degradation via the ERAD (ER-associated degradation) pathway. Has an essential role in the maintenance of ER organization during embryogenesis. The chain is PAT complex subunit CCDC47 from Homo sapiens (Human).